The primary structure comprises 89 residues: MYSLEISLRYSPFPLSIQKKEYEDIKRIYDEIKDSMNSDNQNSPLIELSCEKVQDKLITVLAKEVISVQIYEKSAVAGGSKRPGFSLDI.

Belongs to the UPF0367 family.

In Prochlorococcus marinus subsp. pastoris (strain CCMP1986 / NIES-2087 / MED4), this protein is UPF0367 protein PMM0124.